The chain runs to 201 residues: ATP synthase subunit b 2 (201 aa).

Over residues 1 to 17 (MAEQKNPLTTPSPNADT) the composition is skewed to polar residues. Residues 1–39 (MAEQKNPLTTPSPNADTTIVPAGSPHTHTEQPSGGHGGA) are disordered. The chain crosses the membrane as a helical span at residues 47–66 (TFLSQLIWLALAFGLLYYLM).

It belongs to the ATPase B chain family. In terms of assembly, F-type ATPases have 2 components, F(1) - the catalytic core - and F(0) - the membrane proton channel. F(1) has five subunits: alpha(3), beta(3), gamma(1), delta(1), epsilon(1). F(0) has three main subunits: a(1), b(2) and c(10-14). The alpha and beta chains form an alternating ring which encloses part of the gamma chain. F(1) is attached to F(0) by a central stalk formed by the gamma and epsilon chains, while a peripheral stalk is formed by the delta and b chains.

The protein localises to the cell inner membrane. Functionally, f(1)F(0) ATP synthase produces ATP from ADP in the presence of a proton or sodium gradient. F-type ATPases consist of two structural domains, F(1) containing the extramembraneous catalytic core and F(0) containing the membrane proton channel, linked together by a central stalk and a peripheral stalk. During catalysis, ATP synthesis in the catalytic domain of F(1) is coupled via a rotary mechanism of the central stalk subunits to proton translocation. Component of the F(0) channel, it forms part of the peripheral stalk, linking F(1) to F(0). The b'-subunit is a diverged and duplicated form of b found in plants and photosynthetic bacteria. This Methylorubrum extorquens (strain PA1) (Methylobacterium extorquens) protein is ATP synthase subunit b 2 (atpF2).